We begin with the raw amino-acid sequence, 122 residues long: uncharacterized protein (122 aa).

This is an uncharacterized protein from Human adenovirus F serotype 41 (HAdV-41).